Reading from the N-terminus, the 517-residue chain is Benzoate 4-monooxygenase bphA (517 aa).

A helical transmembrane segment spans residues 4–24; it reads LLLSPYGAYLGLALLVLYYLL. Residues asparagine 282 and asparagine 325 are each glycosylated (N-linked (GlcNAc...) asparagine). Residue cysteine 461 participates in heme binding.

This sequence belongs to the cytochrome P450 family. Heme is required as a cofactor.

It is found in the membrane. The catalysed reaction is benzoate + reduced [NADPH--hemoprotein reductase] + O2 = 4-hydroxybenzoate + oxidized [NADPH--hemoprotein reductase] + H2O + H(+). Cytochrome P450 monooxygenase; part of the benzoic acid degradation pathway also known as the protocatechuic acid pathway. Benzoic acid debradation begins with the conversion of benzoic acid into 4-hydroxybenzoic acid through hydroxylation by the benzoate-4-monooxygenase bphA, and its partner NADPH-cytochrome P450 reductase cprA which act as a mediator in electron donation from NADPH. 4-Hydroxybenzoic acid is then converted into 3,4-dihydroxybenzoic acid (also called protocatechuic acid) by the p-hydroxybenzoate-m-hydroxylase phhA. Protocatechuic acid is converted into 3-carboxy-cis,cis-muconic acid by the intradiol ring-cleavage dioxygenase prcA, which is further metabolized through the 3-oxoadipate pathway to finally enter the tricarboxylic acid cycle (TCA). The protein is Benzoate 4-monooxygenase bphA of Aspergillus niger (strain ATCC MYA-4892 / CBS 513.88 / FGSC A1513).